The sequence spans 245 residues: tRNA pseudouridine synthase A (245 aa).

Residue Asp52 is the Nucleophile of the active site. Residue Tyr111 participates in substrate binding.

This sequence belongs to the tRNA pseudouridine synthase TruA family. Homodimer.

It catalyses the reaction uridine(38/39/40) in tRNA = pseudouridine(38/39/40) in tRNA. Its function is as follows. Formation of pseudouridine at positions 38, 39 and 40 in the anticodon stem and loop of transfer RNAs. The chain is tRNA pseudouridine synthase A from Rickettsia peacockii (strain Rustic).